A 718-amino-acid chain; its full sequence is Catalase-peroxidase (718 aa).

The segment at residues 98–219 (WHAAGTYRMG…LAATEMGLIY (122 aa)) is a cross-link (tryptophyl-tyrosyl-methioninium (Trp-Tyr) (with M-245)). Catalysis depends on His99, which acts as the Proton acceptor. Positions 219–245 (YVNPEGPQASGDPRSAAPFIRATFGNM) form a cross-link, tryptophyl-tyrosyl-methioninium (Tyr-Met) (with W-98). His260 is a heme b binding site.

It belongs to the peroxidase family. Peroxidase/catalase subfamily. In terms of assembly, homodimer or homotetramer. Requires heme b as cofactor. Post-translationally, formation of the three residue Trp-Tyr-Met cross-link is important for the catalase, but not the peroxidase activity of the enzyme.

It carries out the reaction H2O2 + AH2 = A + 2 H2O. The enzyme catalyses 2 H2O2 = O2 + 2 H2O. Bifunctional enzyme with both catalase and broad-spectrum peroxidase activity. The polypeptide is Catalase-peroxidase (Acinetobacter baumannii (strain AB307-0294)).